Here is a 166-residue protein sequence, read N- to C-terminus: Macrocypin-5a (166 aa).

Residues 20–39 (NIPGGMYASSKDGKDEPVTA) are disordered.

It belongs to the protease inhibitor I85 family.

Its function is as follows. Inhibits papain and cysteine cathepsin endopeptidases, and also inhibits cathepsins B and H, which exhibit both exopeptidase and endopeptidase activities. This chain is Macrocypin-5a, found in Macrolepiota procera (Parasol mushroom).